The primary structure comprises 464 residues: Type I restriction enzyme EcoKI specificity subunit (464 aa).

Belongs to the type-I restriction system S methylase family. The type I restriction/modification system is composed of three polypeptides R, M and S. The restriction enzyme has stoichiometry R(2)M(2)S(1). The methyltransferase is composed of M(2)S(1). In terms of assembly, (Microbial infection) Interacts with Escherichia phage T7 protein Ocr; this interaction leads to the inhibition of the methyltransferase restriction enzyme M.EcoKI composed of M(2)S(1).

In terms of biological role, the specificity (S) subunit of a type I restriction enzyme; this subunit dictates DNA sequence specificity. The M and S subunits together form a methyltransferase (MTase) that methylates A-2 on the top and A-3 on the bottom strand of the sequence 5'-AACN(6)GTGC-3'. In the presence of the R subunit the complex can also act as an endonuclease, binding to the same target sequence but cutting the DNA some distance from this site. Whether the DNA is cut or modified depends on the methylation state of the target sequence. When the target site is unmodified, the DNA is cut. When the target site is hemimethylated, the complex acts as a maintenance MTase modifying the DNA so that both strands become methylated. After locating a non-methylated recognition site, the enzyme complex serves as a molecular motor that translocates DNA in an ATP-dependent manner until a collision occurs that triggers cleavage. This Escherichia coli (strain K12) protein is Type I restriction enzyme EcoKI specificity subunit.